The chain runs to 466 residues: Glutamate--tRNA ligase (466 aa).

Positions 10–20 (PSPTGYLHIGG) match the 'HIGH' region motif. The 'KMSKS' region signature appears at 237–241 (RLSKR). K240 provides a ligand contact to ATP.

It belongs to the class-I aminoacyl-tRNA synthetase family. Glutamate--tRNA ligase type 1 subfamily. In terms of assembly, monomer.

It localises to the cytoplasm. The catalysed reaction is tRNA(Glu) + L-glutamate + ATP = L-glutamyl-tRNA(Glu) + AMP + diphosphate. Its function is as follows. Catalyzes the attachment of glutamate to tRNA(Glu) in a two-step reaction: glutamate is first activated by ATP to form Glu-AMP and then transferred to the acceptor end of tRNA(Glu). The protein is Glutamate--tRNA ligase of Syntrophotalea carbinolica (strain DSM 2380 / NBRC 103641 / GraBd1) (Pelobacter carbinolicus).